A 94-amino-acid polypeptide reads, in one-letter code: Protein translocase subunit SecE (94 aa).

Residues Met1–Lys32 are disordered. Basic residues predominate over residues Lys22 to Lys32. Residues Thr65–Phe85 form a helical membrane-spanning segment.

This sequence belongs to the SecE/SEC61-gamma family. In terms of assembly, component of the Sec protein translocase complex. Heterotrimer consisting of SecY, SecE and SecG subunits. The heterotrimers can form oligomers, although 1 heterotrimer is thought to be able to translocate proteins. Interacts with the ribosome. Interacts with SecDF, and other proteins may be involved. Interacts with SecA.

The protein resides in the cell membrane. In terms of biological role, essential subunit of the Sec protein translocation channel SecYEG. Clamps together the 2 halves of SecY. May contact the channel plug during translocation. This Streptomyces coelicolor (strain ATCC BAA-471 / A3(2) / M145) protein is Protein translocase subunit SecE.